A 701-amino-acid polypeptide reads, in one-letter code: Acetyl-coenzyme A synthetase, cytoplasmic (701 aa).

Residues 1-26 are compositionally biased toward basic and acidic residues; the sequence is MGLPEERRKSGSGSRAREETGAEGRV. The disordered stretch occupies residues 1-37; sequence MGLPEERRKSGSGSRAREETGAEGRVRGWSPPPEVRR. Positions 1–107 are interaction with TFEB; sequence MGLPEERRKS…GATTNICYNV (107 aa). Position 30 is a phosphoserine (S30). 219 to 222 contributes to the CoA binding site; that stretch reads RGEK. Residues S263, S265, and S267 each carry the phosphoserine modification. CoA is bound at residue T363. K418 carries the post-translational modification N6-acetyllysine. ATP-binding positions include 439-441, 463-468, D552, and R567; these read GEP and DTFWQT. 2 residues coordinate CoA: S575 and R636. The Nuclear localization signal motif lies at 656-668; sequence KTRSGKIMRRVLR. Residue S659 is modified to Phosphoserine; by AMPK. Residue K661 is modified to N6-acetyllysine.

This sequence belongs to the ATP-dependent AMP-binding enzyme family. Monomer. Interacts with TFEB. AMPK-mediated phosphorylated form at Ser-659 interacts with KPNA1; this interaction results in nuclear translocation of ACSS2. Interacts with the 'Thr-172' phosphorylated form of PRKAA2. Interacts with CREBBP. In terms of processing, reversibly acetylated at Lys-661. The acetyl-CoA synthase activity is inhibited by acetylation and activated by deacetylation mediated by the deacetylases SIRT1 and SIRT3. In terms of tissue distribution, expressed in the hippocampus.

The protein localises to the cytoplasm. Its subcellular location is the cytosol. The protein resides in the nucleus. It catalyses the reaction acetate + ATP + CoA = acetyl-CoA + AMP + diphosphate. The catalysed reaction is propanoate + ATP + CoA = propanoyl-CoA + AMP + diphosphate. Its activity is regulated as follows. Inhibited by acetylation at Lys-661 and activated by deacetylation mediated by the deacetylases SIRT1 and SIRT3. Its function is as follows. Catalyzes the synthesis of acetyl-CoA from short-chain fatty acids. Acetate is the preferred substrate but can also utilize propionate with a much lower affinity. Nuclear ACSS2 promotes glucose deprivation-induced lysosomal biogenesis and autophagy, tumor cell survival and brain tumorigenesis. Glucose deprivation results in AMPK-mediated phosphorylation of ACSS2 leading to its translocation to the nucleus where it binds to TFEB and locally produces acetyl-CoA for histone acetylation in the promoter regions of TFEB target genes thereby activating their transcription. The regulation of genes associated with autophagy and lysosomal activity through ACSS2 is important for brain tumorigenesis and tumor survival. Acts as a chromatin-bound transcriptional coactivator that up-regulates histone acetylation and expression of neuronal genes. Can be recruited to the loci of memory-related neuronal genes to maintain a local acetyl-CoA pool, providing the substrate for histone acetylation and promoting the expression of specific genes, which is essential for maintaining long-term spatial memory. The protein is Acetyl-coenzyme A synthetase, cytoplasmic (Acss2) of Mus musculus (Mouse).